The sequence spans 625 residues: DNA-directed RNA polymerase subunit gamma (625 aa).

Cys71, Cys73, Cys86, and Cys89 together coordinate Zn(2+). Asp467, Asp469, and Asp471 together coordinate Mg(2+).

The protein belongs to the RNA polymerase beta' chain family. RpoC1 subfamily. As to quaternary structure, in cyanobacteria the RNAP catalytic core is composed of 2 alpha, 1 beta, 1 beta', 1 gamma and 1 omega subunit. When a sigma factor is associated with the core the holoenzyme is formed, which can initiate transcription. Mg(2+) is required as a cofactor. The cofactor is Zn(2+).

It carries out the reaction RNA(n) + a ribonucleoside 5'-triphosphate = RNA(n+1) + diphosphate. Its function is as follows. DNA-dependent RNA polymerase catalyzes the transcription of DNA into RNA using the four ribonucleoside triphosphates as substrates. This Gloeothece citriformis (strain PCC 7424) (Cyanothece sp. (strain PCC 7424)) protein is DNA-directed RNA polymerase subunit gamma.